The chain runs to 144 residues: Large ribosomal subunit protein uL15 (144 aa).

Residues M1–V48 form a disordered region. The span at R21–A31 shows a compositional bias: gly residues.

This sequence belongs to the universal ribosomal protein uL15 family. In terms of assembly, part of the 50S ribosomal subunit.

In terms of biological role, binds to the 23S rRNA. This is Large ribosomal subunit protein uL15 from Cupriavidus pinatubonensis (strain JMP 134 / LMG 1197) (Cupriavidus necator (strain JMP 134)).